The sequence spans 724 residues: Cyclin-T1 (724 aa).

At S117 the chain carries Phosphoserine. The Nuclear localization signal signature appears at 253 to 270 (KRIRNWRAYQAAMKTKPD). K342 is covalently cross-linked (Glycyl lysine isopeptide (Lys-Gly) (interchain with G-Cter in SUMO2)). The stretch at 384–425 (SAKVSLKEYRAKHAEELAAQKRQLENMEANVKSQYAYAAQNL) forms a coiled coil. S388 is subject to Phosphoserine. K390 is modified (N6-acetyllysine). Residue K415 forms a Glycyl lysine isopeptide (Lys-Gly) (interchain with G-Cter in SUMO2) linkage. ADP-ribosylserine is present on residues S416, S473, and S474. A histidine-rich domain (HRD) region spans residues 479-549 (IKMRIKVHSA…RPSDPKHSSQ (71 aa)). Residue K480 forms a Glycyl lysine isopeptide (Lys-Gly) (interchain with G-Cter in SUMO2) linkage. Positions 483–507 (IKVHSAGDKHNSIEDSVTKSREHKE) are enriched in basic and acidic residues. 2 disordered regions span residues 483-586 (IKVH…VFDH) and 691-724 (PRAG…PLPK). N6-(ADP-ribosyl)lysine is present on K484. ADP-ribosylhistidine is present on H486. 2 positions are modified to phosphoserine: S494 and S498. A compositionally biased stretch (basic residues) spans 508–529 (KQRTHPSNHHHHHNHHSHRHSH). Residue H529 is modified to ADP-ribosylhistidine. ADP-ribosylserine occurs at positions 548 and 551. ADP-ribosylhistidine is present on H555. Positions 559 to 569 (SLSSTLSSSSS) are enriched in low complexity. S562 is modified (ADP-ribosylserine). Over residues 708–724 (PPPLPSEPPPPLPPLPK) the composition is skewed to pro residues.

This sequence belongs to the cyclin family. Cyclin C subfamily. As to quaternary structure, cyclin-T1 is the predominant cyclin that associates with CDK9 to form a heterodimer called P-TEFb. P-TEFb forms a complex with AFF4/AF5Q31. Component of a complex which is at least composed of HTATSF1/Tat-SF1, P-TEFb complex, RNA pol II, SUPT5H, and NCL/nucleolin. Component of the 7SK snRNP complex at least composed of P-TEFb (composed of CDK9 and CCNT1/cyclin-T1), HEXIM1, HEXIM2, BCDIN3, SART3 proteins and 7SK and U6 snRNAs. Interacts (via central region) with ZMYND8 (via N-terminus); the interaction is direct and the association appears to occur between homodimeric ZMYND8 and the activated form of the P-TEFb complex. Interacts with BRD4, targets chromatin binding. Interacts with JMJD6. Interacts with MDFIC. Interacts with HSF1. Interacts with HTATSF1. Interacts with TBX21. ADP-ribosylation on serine residues by PARP1 in response to DNA damage disrupts the phase separation activity of CCNT1, thereby preventing activation of CDK9.

The protein localises to the nucleus. Regulatory subunit of the cyclin-dependent kinase pair (CDK9/cyclin-T1) complex, also called positive transcription elongation factor B (P-TEFb), which facilitates the transition from abortive to productive elongation by phosphorylating the CTD (C-terminal domain) of the large subunit of RNA polymerase II (RNA Pol II). Required to activate the protein kinase activity of CDK9: acts by mediating formation of liquid-liquid phase separation (LLPS) that enhances binding of P-TEFb to the CTD of RNA Pol II. In Mus musculus (Mouse), this protein is Cyclin-T1 (Ccnt1).